Reading from the N-terminus, the 616-residue chain is Dihydroxy-acid dehydratase (616 aa).

D81 lines the Mg(2+) pocket. A [2Fe-2S] cluster-binding site is contributed by C122. Residues D123 and K124 each coordinate Mg(2+). K124 carries the post-translational modification N6-carboxylysine. C195 contacts [2Fe-2S] cluster. Residue E491 participates in Mg(2+) binding. The active-site Proton acceptor is S517.

Belongs to the IlvD/Edd family. In terms of assembly, homodimer. It depends on [2Fe-2S] cluster as a cofactor. Requires Mg(2+) as cofactor.

It catalyses the reaction (2R)-2,3-dihydroxy-3-methylbutanoate = 3-methyl-2-oxobutanoate + H2O. It carries out the reaction (2R,3R)-2,3-dihydroxy-3-methylpentanoate = (S)-3-methyl-2-oxopentanoate + H2O. Its pathway is amino-acid biosynthesis; L-isoleucine biosynthesis; L-isoleucine from 2-oxobutanoate: step 3/4. It functions in the pathway amino-acid biosynthesis; L-valine biosynthesis; L-valine from pyruvate: step 3/4. In terms of biological role, functions in the biosynthesis of branched-chain amino acids. Catalyzes the dehydration of (2R,3R)-2,3-dihydroxy-3-methylpentanoate (2,3-dihydroxy-3-methylvalerate) into 2-oxo-3-methylpentanoate (2-oxo-3-methylvalerate) and of (2R)-2,3-dihydroxy-3-methylbutanoate (2,3-dihydroxyisovalerate) into 2-oxo-3-methylbutanoate (2-oxoisovalerate), the penultimate precursor to L-isoleucine and L-valine, respectively. In Pectobacterium carotovorum subsp. carotovorum (strain PC1), this protein is Dihydroxy-acid dehydratase.